Here is a 454-residue protein sequence, read N- to C-terminus: NADP-specific glutamate dehydrogenase (454 aa).

The residue at position 2 (Ser2) is an N-acetylserine. Residue Lys114 is part of the active site.

Belongs to the Glu/Leu/Phe/Val dehydrogenases family. In terms of assembly, homohexamer.

The enzyme catalyses L-glutamate + NADP(+) + H2O = 2-oxoglutarate + NH4(+) + NADPH + H(+). The polypeptide is NADP-specific glutamate dehydrogenase (gdh) (Neurospora crassa (strain ATCC 24698 / 74-OR23-1A / CBS 708.71 / DSM 1257 / FGSC 987)).